We begin with the raw amino-acid sequence, 100 residues long: Urease subunit gamma (100 aa).

The protein belongs to the urease gamma subunit family. As to quaternary structure, heterotrimer of UreA (gamma), UreB (beta) and UreC (alpha) subunits. Three heterotrimers associate to form the active enzyme.

The protein resides in the cytoplasm. The enzyme catalyses urea + 2 H2O + H(+) = hydrogencarbonate + 2 NH4(+). It functions in the pathway nitrogen metabolism; urea degradation; CO(2) and NH(3) from urea (urease route): step 1/1. This chain is Urease subunit gamma, found in Synechococcus sp. (strain CC9605).